The primary structure comprises 164 residues: Phosphopantetheine adenylyltransferase (164 aa).

A substrate-binding site is contributed by Ser11. Residues 11 to 12 and His19 each bind ATP; that span reads SF. Lys43, Ala76, and Arg90 together coordinate substrate. ATP-binding positions include 91–93, Glu101, and 126–132; these read GLR and YQHISSS.

Belongs to the bacterial CoaD family. In terms of assembly, homohexamer. Mg(2+) serves as cofactor.

It localises to the cytoplasm. The catalysed reaction is (R)-4'-phosphopantetheine + ATP + H(+) = 3'-dephospho-CoA + diphosphate. It functions in the pathway cofactor biosynthesis; coenzyme A biosynthesis; CoA from (R)-pantothenate: step 4/5. Its function is as follows. Reversibly transfers an adenylyl group from ATP to 4'-phosphopantetheine, yielding dephospho-CoA (dPCoA) and pyrophosphate. The chain is Phosphopantetheine adenylyltransferase from Streptococcus gordonii (strain Challis / ATCC 35105 / BCRC 15272 / CH1 / DL1 / V288).